Consider the following 113-residue polypeptide: Large ribosomal subunit protein uL22 (113 aa).

It belongs to the universal ribosomal protein uL22 family. As to quaternary structure, part of the 50S ribosomal subunit.

Its function is as follows. This protein binds specifically to 23S rRNA; its binding is stimulated by other ribosomal proteins, e.g. L4, L17, and L20. It is important during the early stages of 50S assembly. It makes multiple contacts with different domains of the 23S rRNA in the assembled 50S subunit and ribosome. Functionally, the globular domain of the protein is located near the polypeptide exit tunnel on the outside of the subunit, while an extended beta-hairpin is found that lines the wall of the exit tunnel in the center of the 70S ribosome. In Bacillus mycoides (strain KBAB4) (Bacillus weihenstephanensis), this protein is Large ribosomal subunit protein uL22.